A 415-amino-acid chain; its full sequence is Serine hydroxymethyltransferase (415 aa).

(6S)-5,6,7,8-tetrahydrofolate contacts are provided by residues L120 and 124-126 (GHL). K229 bears the N6-(pyridoxal phosphate)lysine mark.

The protein belongs to the SHMT family. In terms of assembly, homodimer. It depends on pyridoxal 5'-phosphate as a cofactor.

Its subcellular location is the cytoplasm. It carries out the reaction (6R)-5,10-methylene-5,6,7,8-tetrahydrofolate + glycine + H2O = (6S)-5,6,7,8-tetrahydrofolate + L-serine. Its pathway is one-carbon metabolism; tetrahydrofolate interconversion. It functions in the pathway amino-acid biosynthesis; glycine biosynthesis; glycine from L-serine: step 1/1. Its function is as follows. Catalyzes the reversible interconversion of serine and glycine with tetrahydrofolate (THF) serving as the one-carbon carrier. This reaction serves as the major source of one-carbon groups required for the biosynthesis of purines, thymidylate, methionine, and other important biomolecules. Also exhibits THF-independent aldolase activity toward beta-hydroxyamino acids, producing glycine and aldehydes, via a retro-aldol mechanism. The sequence is that of Serine hydroxymethyltransferase from Caldicellulosiruptor bescii (strain ATCC BAA-1888 / DSM 6725 / KCTC 15123 / Z-1320) (Anaerocellum thermophilum).